Consider the following 333-residue polypeptide: Ornithine carbamoyltransferase (333 aa).

Carbamoyl phosphate is bound by residues 56–59 (STRT), Arg-107, and 134–137 (HPTQ). L-ornithine is bound by residues Asn-167, Asp-231, and 235 to 236 (SM). Residues 273–274 (CL) and Arg-318 each bind carbamoyl phosphate.

The protein belongs to the aspartate/ornithine carbamoyltransferase superfamily. OTCase family.

It localises to the cytoplasm. It catalyses the reaction carbamoyl phosphate + L-ornithine = L-citrulline + phosphate + H(+). It functions in the pathway amino-acid degradation; L-arginine degradation via ADI pathway; carbamoyl phosphate from L-arginine: step 2/2. Functionally, reversibly catalyzes the transfer of the carbamoyl group from carbamoyl phosphate (CP) to the N(epsilon) atom of ornithine (ORN) to produce L-citrulline. The polypeptide is Ornithine carbamoyltransferase (Clostridium botulinum (strain ATCC 19397 / Type A)).